Consider the following 920-residue polypeptide: DNA ligase (920 aa).

Residues 90–94 (DAAYD), 139–140 (SL), and Glu-173 contribute to the NAD(+) site. Catalysis depends on Lys-175, which acts as the N6-AMP-lysine intermediate. Arg-196, Glu-235, Lys-360, and Lys-384 together coordinate NAD(+). Zn(2+)-binding residues include Cys-481, Cys-484, Cys-500, and Cys-506. Residues 659–691 (RAQGEAAIESAETQGDTASETTGAPTGAEAPLG) form a disordered region. The segment covering 669-682 (AETQGDTASETTGA) has biased composition (polar residues). The region spanning 839–920 (SLPQTLAGKT…FAQLLATGTI (82 aa)) is the BRCT domain.

The protein belongs to the NAD-dependent DNA ligase family. LigA subfamily. It depends on Mg(2+) as a cofactor. Mn(2+) serves as cofactor.

It catalyses the reaction NAD(+) + (deoxyribonucleotide)n-3'-hydroxyl + 5'-phospho-(deoxyribonucleotide)m = (deoxyribonucleotide)n+m + AMP + beta-nicotinamide D-nucleotide.. Functionally, DNA ligase that catalyzes the formation of phosphodiester linkages between 5'-phosphoryl and 3'-hydroxyl groups in double-stranded DNA using NAD as a coenzyme and as the energy source for the reaction. It is essential for DNA replication and repair of damaged DNA. In Bifidobacterium longum (strain NCC 2705), this protein is DNA ligase.